The sequence spans 900 residues: Alanine--tRNA ligase (900 aa).

Residues His567, His571, Cys671, and His675 each coordinate Zn(2+).

This sequence belongs to the class-II aminoacyl-tRNA synthetase family. It depends on Zn(2+) as a cofactor.

The protein resides in the cytoplasm. The enzyme catalyses tRNA(Ala) + L-alanine + ATP = L-alanyl-tRNA(Ala) + AMP + diphosphate. Its function is as follows. Catalyzes the attachment of alanine to tRNA(Ala) in a two-step reaction: alanine is first activated by ATP to form Ala-AMP and then transferred to the acceptor end of tRNA(Ala). Also edits incorrectly charged Ser-tRNA(Ala) and Gly-tRNA(Ala) via its editing domain. This chain is Alanine--tRNA ligase, found in Mycoplasma pneumoniae (strain ATCC 29342 / M129 / Subtype 1) (Mycoplasmoides pneumoniae).